The primary structure comprises 1910 residues: A disintegrin and metalloproteinase with thrombospondin motifs 20 (1910 aa).

A signal peptide spans 1 to 21 (MWVAKWLTGLLYHLSLFITRS). Residues 22 to 253 (WEVDFHPRQE…DERRHSRKKR (232 aa)) constitute a propeptide that is removed on maturation. 2 N-linked (GlcNAc...) asparagine glycosylation sites follow: Asn92 and Asn191. The Peptidase M12B domain maps to 259-467 (RYIEIMVTAD…GYGECLLDKP (209 aa)). 11 disulfide bridges follow: Cys334/Cys387, Cys363/Cys369, Cys381/Cys462, Cys419/Cys446, Cys489/Cys511, Cys500/Cys521, Cys506/Cys540, Cys534/Cys545, Cys568/Cys605, Cys572/Cys610, and Cys583/Cys595. A Zn(2+)-binding site is contributed by His403. The active site involves Glu404. Positions 407 and 413 each coordinate Zn(2+). Asn445 carries an N-linked (GlcNAc...) asparagine glycan. The Disintegrin domain maps to 468-555 (DEEIYNLPSE…VNKETETRPV (88 aa)). The region spanning 556 to 611 (NGEWGPWEPYSSCSRTCGGGIESATRRCNRPEPRNGGNYCVGRRMKFRSCNTDSCP) is the TSP type-1 1 domain. 5 N-linked (GlcNAc...) asparagine glycosylation sites follow: Asn702, Asn717, Asn728, Asn809, and Asn870. Residues 724 to 846 (TGVFNSSHYG…FNIPLEERSD (123 aa)) are spacer. 14 TSP type-1 domains span residues 846-904 (DMFT…NTDC), 905-961 (ELRW…QELC), 966-1023 (VFTR…FSCP), 1024-1073 (SWAA…SPCE), 1076-1135 (TCAS…TPCS), 1152-1206 (KMAQ…DCFT), 1207-1264 (PCGE…AACP), 1304-1356 (RGNQ…QCGP), 1358-1416 (PCPQ…HACP), 1417-1475 (ADVS…VRCP), 1476-1531 (SWKA…QDCV), 1535-1588 (GMER…NPPC), 1589-1652 (NYIV…INSC), and 1654-1710 (HLAT…NDCK). N-linked (GlcNAc...) asparagine glycosylation occurs at Asn1061. Residue Asn1456 is glycosylated (N-linked (GlcNAc...) asparagine). 2 N-linked (GlcNAc...) asparagine glycosylation sites follow: Asn1542 and Asn1572. The GON domain maps to 1711–1910 (SFTTCKEIQV…MTTGLPIQVI (200 aa)). N-linked (GlcNAc...) asparagine glycosylation is found at Asn1763, Asn1781, and Asn1852.

It depends on Zn(2+) as a cofactor. The precursor is cleaved by a furin endopeptidase. In terms of processing, glycosylated. Can be O-fucosylated by POFUT2 on a serine or a threonine residue found within the consensus sequence C1-X(2)-(S/T)-C2-G of the TSP type-1 repeat domains where C1 and C2 are the first and second cysteine residue of the repeat, respectively. Fucosylated repeats can then be further glycosylated by the addition of a beta-1,3-glucose residue by the glucosyltransferase, B3GALTL. Fucosylation mediates the efficient secretion of ADAMTS family members. Can also be C-glycosylated with one or two mannose molecules on tryptophan residues within the consensus sequence W-X-X-W of the TPRs, and N-glycosylated. These other glycosylations can also facilitate secretion. Very sparingly expressed, although is detected at low levels in testis, prostate, ovary, heart, placenta, lung and pancreas. Overexpressed in several brain, colon and breast carcinomas.

It is found in the secreted. Its subcellular location is the extracellular space. It localises to the extracellular matrix. Its function is as follows. May play a role in tissue-remodeling process occurring in both normal and pathological conditions. May have a protease-independent function in the transport from the endoplasmic reticulum to the Golgi apparatus of secretory cargos, mediated by the GON domain. The chain is A disintegrin and metalloproteinase with thrombospondin motifs 20 (ADAMTS20) from Homo sapiens (Human).